A 175-amino-acid chain; its full sequence is MTSNKDKNKKANEILYAFSIIGIIPLMAILILRINDPYSQVLYYLYNKVAFLPSITSLHDPVMTTLMSNYNKTAPVMGILVFLCTYKTREIIKPVTRKLVVQSCFWGPVFYAILIYITLFYNLELTTAGGFFKLLSHNVITLFILYCSIYFTVLTMTYAILLMPLLVIKYFKGRQ.

The next 3 helical transmembrane spans lie at 14-32 (ILYAFSIIGIIPLMAILIL), 104-121 (CFWGPVFYAILIYITLFY), and 149-168 (IYFTVLTMTYAILLMPLLVI).

The protein localises to the cell inner membrane. This protein is able to protect a cell, which harbors the plasmid ColB encoding colicin B, against colicin B. The sequence is that of Colicin-B immunity protein (cbi) from Escherichia coli.